The chain runs to 943 residues: Netrin receptor UNC5B-a (943 aa).

The N-terminal stretch at 1 to 30 (MYLSRNPSGAALAAILVALILSCNFPSSTA) is a signal peptide. Residues 31–380 (GIEYSDVLPD…LESTGDVALY (350 aa)) lie on the Extracellular side of the membrane. An Ig-like domain is found at 51–148 (PHFLLEPEDA…AGTTKSKRSY (98 aa)). 9 disulfide bridges follow: cysteine 72/cysteine 133, cysteine 84/cysteine 131, cysteine 177/cysteine 228, cysteine 261/cysteine 298, cysteine 265/cysteine 302, cysteine 276/cysteine 288, cysteine 317/cysteine 351, cysteine 321/cysteine 356, and cysteine 329/cysteine 341. One can recognise an Ig-like C2-type domain in the interval 150–245 (RIAYLRKNFD…KRRSTTATVI (96 aa)). The N-linked (GlcNAc...) asparagine glycan is linked to asparagine 225. 2 TSP type-1 domains span residues 249-303 (NGGW…TMCP) and 305-357 (DGGW…GLCM). Asparagine 350 carries an N-linked (GlcNAc...) asparagine glycan. The helical transmembrane segment at 381–401 (AGLVVAIFIVIILLMAVGIVV) threads the bilayer. At 402 to 943 (YRRNCREFDT…MLVMATDGDC (542 aa)) the chain is on the cytoplasmic side. One can recognise a ZU5 domain in the interval 542 to 685 (NSVTGTFGSL…LGTYAFVGES (144 aa)). The segment at 688 to 836 (RSAIKRLQLA…LEENVKSFDP (149 aa)) is UPA domain. A Death domain is found at 863 to 941 (KICNSLDAPN…EMMLVMATDG (79 aa)).

This sequence belongs to the unc-5 family. Interacts (via extracellular domain) with flrt3 (via extracellular domain). Interacts with rnd1. In terms of processing, phosphorylated on cytoplasmic tyrosine residues. In the developing visual system, it is expressed within the developing optic vesicles and later become restricted to the dorsal ciliary marginal zone, a site of retinoblast proliferation and differentiation.

The protein resides in the cell membrane. In terms of biological role, plays a role in cell-cell adhesion during embryonic development. Receptor for netrin required for axon guidance. Mediates axon repulsion of neuronal growth cones in the developing nervous system upon ligand binding. This Xenopus laevis (African clawed frog) protein is Netrin receptor UNC5B-a (unc5b-a).